Reading from the N-terminus, the 206-residue chain is Somatotropin (206 aa).

Positions 1 to 22 (MAGLHFFPALLALLMASLQTHQ) are cleaved as a signal peptide. Cystine bridges form between Cys-75/Cys-179 and Cys-196/Cys-204.

Belongs to the somatotropin/prolactin family.

The protein localises to the secreted. Functionally, growth hormone plays an important role in growth control and is involved in the regulation of several anabolic processes. Implicated as an osmoregulatory substance important for seawater adaptation. The sequence is that of Somatotropin (gh) from Protopterus annectens (African lungfish).